The following is a 184-amino-acid chain: Fungal defensin copsin (184 aa).

The N-terminal stretch at 1–23 is a signal peptide; the sequence is MKLSTSLLAIVAVASTFIGNALS. The propeptide occupies 24 to 127; it reads ATTVPGCFAE…LGRVLPVEKR (104 aa). A Pyrrolidone carboxylic acid modification is found at Gln128. Disulfide bonds link Cys130–Cys159, Cys137–Cys167, Cys145–Cys175, Cys149–Cys177, Cys152–Cys184, and Cys162–Cys181.

Belongs to the invertebrate defensin family. Post-translationally, contains a unique connectivity of 6 cysteine bonds in contrast to most other CS-alpha-beta defensins which are linked by 3 or 4 disulfide bonds. In terms of processing, disulfide bonds are essential for structural integrity and antibacterial activity, since activity is lost after treatment with reducing agents. Thanks to disulfide bonds and N-terminal pyroglutamate, the protein is extremely stable in a wide pH and temperature range and insensitive toward proteases.

The protein resides in the secreted. It is found in the target cell membrane. Functionally, antimicrobial peptide that acts against Gram-positive bacteria (Listeria spp., Enterococcus spp., B.subtilis, B.anthracis, P.aeruginosa). Is not active against Gram-negative bacteria. It selectively inhibits peptidoglycan biosynthesis through complex formation with the cell wall precursor lipid II (1:1 molar ratio), probably anchoring lipid II to the membrane, thus inhibiting cell wall synthesis. The interaction with lipid II involves the third position of the pentapeptide. Shows bactericidal activity at about 2-fold minimal inhibitory concentrations (MIC), but does not form pore across the membrane. The chain is Fungal defensin copsin from Coprinopsis cinerea (Inky cap fungus).